The following is a 179-amino-acid chain: Crossover junction endodeoxyribonuclease RuvC (179 aa).

Active-site residues include D12, E72, and D144. Mg(2+) contacts are provided by D12, E72, and D144.

Belongs to the RuvC family. In terms of assembly, homodimer which binds Holliday junction (HJ) DNA. The HJ becomes 2-fold symmetrical on binding to RuvC with unstacked arms; it has a different conformation from HJ DNA in complex with RuvA. In the full resolvosome a probable DNA-RuvA(4)-RuvB(12)-RuvC(2) complex forms which resolves the HJ. Mg(2+) is required as a cofactor.

The protein localises to the cytoplasm. The enzyme catalyses Endonucleolytic cleavage at a junction such as a reciprocal single-stranded crossover between two homologous DNA duplexes (Holliday junction).. The RuvA-RuvB-RuvC complex processes Holliday junction (HJ) DNA during genetic recombination and DNA repair. Endonuclease that resolves HJ intermediates. Cleaves cruciform DNA by making single-stranded nicks across the HJ at symmetrical positions within the homologous arms, yielding a 5'-phosphate and a 3'-hydroxyl group; requires a central core of homology in the junction. The consensus cleavage sequence is 5'-(A/T)TT(C/G)-3'. Cleavage occurs on the 3'-side of the TT dinucleotide at the point of strand exchange. HJ branch migration catalyzed by RuvA-RuvB allows RuvC to scan DNA until it finds its consensus sequence, where it cleaves and resolves the cruciform DNA. This chain is Crossover junction endodeoxyribonuclease RuvC, found in Dechloromonas aromatica (strain RCB).